A 254-amino-acid chain; its full sequence is MDRVKLTGVVLRAVDYGESDRVVTLLTAERGKVSAFARGARASRRRFGGALEPFTLLSAEVRERSGSDLLGLDSVSVVRGFGALRGDLGRIACAGYAAELARELVRDHQPHDELFELLVAYLDALDAGPPRPAALRAFELGALRAAGLMPRLDACARCGAPVGEGPVRFDAGEGGALCAGCAPGVPRTLPLAAGTLAALLRLQDGGLAAAASEPLAPPAGREAREALTAFLEHHLGRRLAARRFLDEIGPLLGA.

Belongs to the RecO family.

Involved in DNA repair and RecF pathway recombination. The chain is DNA repair protein RecO from Anaeromyxobacter sp. (strain K).